Here is a 242-residue protein sequence, read N- to C-terminus: Ras-like protein family member 11A (242 aa).

The small GTPase-like stretch occupies residues 17–241 (ESSSDYLLPK…SSKAKAASTL (225 aa)). GTP is bound by residues 34 to 41 (GASCVGKS), 81 to 85 (DTPGG), and 147 to 150 (NKGD).

This sequence belongs to the small GTPase superfamily. Ras family. As to quaternary structure, interacts with UBF/UBTF.

It is found in the nucleus. The protein localises to the nucleolus. It carries out the reaction GTP + H2O = GDP + phosphate + H(+). Its function is as follows. Regulator of rDNA transcription. Acts in cooperation UBF/UBTF and positively regulates RNA polymerase I transcription. This is Ras-like protein family member 11A from Rattus norvegicus (Rat).